Reading from the N-terminus, the 322-residue chain is Thioredoxin reductase (322 aa).

FAD-binding positions include 12–15 (SGPA), 34–42 (EGAVTAGGA), Asn-51, and Val-84. An intrachain disulfide couples Cys-136 to Cys-139. Positions 176, 182, and 259 each coordinate NADP(+). Residues Asp-279 and 286–289 (RQAI) contribute to the FAD site. Arg-286 is an NADP(+) binding site.

Belongs to the class-II pyridine nucleotide-disulfide oxidoreductase family. In terms of assembly, homodimer. FAD serves as cofactor.

The enzyme catalyses [thioredoxin]-dithiol + NADP(+) = [thioredoxin]-disulfide + NADPH + H(+). Its function is as follows. Component of the thioredoxin-thioredoxin reductase system which may be involved in biosynthesis of penicillins and cephalosporins and may be important in determining the thiol-disulfide redox balance. The protein is Thioredoxin reductase of Streptomyces clavuligerus.